The primary structure comprises 418 residues: L-rhamnose isomerase (418 aa).

Mn(2+) contacts are provided by histidine 262, aspartate 294, and aspartate 296.

Belongs to the rhamnose isomerase family. Homotetramer. Requires Mn(2+) as cofactor.

It is found in the cytoplasm. It catalyses the reaction L-rhamnopyranose = L-rhamnulose. It participates in carbohydrate degradation; L-rhamnose degradation; glycerone phosphate from L-rhamnose: step 1/3. Catalyzes the interconversion of L-rhamnose and L-rhamnulose. The protein is L-rhamnose isomerase of Cronobacter sakazakii (strain ATCC BAA-894) (Enterobacter sakazakii).